Reading from the N-terminus, the 571-residue chain is Glutamate--tRNA ligase (571 aa).

A 'HIGH' region motif is present at residues 106 to 116 (PNPDGAFHLGN).

It belongs to the class-I aminoacyl-tRNA synthetase family. Glutamate--tRNA ligase type 2 subfamily.

It localises to the cytoplasm. It carries out the reaction tRNA(Glu) + L-glutamate + ATP = L-glutamyl-tRNA(Glu) + AMP + diphosphate. In terms of biological role, catalyzes the attachment of glutamate to tRNA(Glu) in a two-step reaction: glutamate is first activated by ATP to form Glu-AMP and then transferred to the acceptor end of tRNA(Glu). The polypeptide is Glutamate--tRNA ligase (Pyrococcus abyssi (strain GE5 / Orsay)).